The chain runs to 247 residues: UPF0309 protein GWCH70_1414 (247 aa).

The 184-residue stretch at 31 to 214 (VSEAIQKGGI…VLMAENGFEP (184 aa)) folds into the SIS domain.

The protein belongs to the UPF0309 family.

The polypeptide is UPF0309 protein GWCH70_1414 (Geobacillus sp. (strain WCH70)).